The chain runs to 77 residues: U8-lycotoxin-Ls1b (77 aa).

The N-terminal stretch at 1–20 is a signal peptide; that stretch reads MKLIIFTGLVLFAIVSLIEA. Residues 21–26 constitute a propeptide that is removed on maturation; that stretch reads QAENEK.

The protein belongs to the neurotoxin 19 (CSTX) family. 08 (U8-Lctx) subfamily. Post-translationally, contains 4 disulfide bonds. As to expression, expressed by the venom gland.

The protein resides in the secreted. The chain is U8-lycotoxin-Ls1b from Lycosa singoriensis (Wolf spider).